Reading from the N-terminus, the 517-residue chain is Anthranilate--CoA ligase (517 aa).

An AMP-binding site is contributed by 161 to 172 (LQYTSGSTGAPK).

Belongs to the ATP-dependent AMP-binding enzyme family. As to quaternary structure, monomer.

It catalyses the reaction anthranilate + ATP + CoA = anthraniloyl-CoA + AMP + diphosphate. Functionally, catalyzes the formation of anthraniloyl-CoA, which is the priming step for entry into the Pseudomonas quinolone signal (PQS) biosynthetic pathway. Also active on a variety of aromatic substrates, including benzoate and chloro and fluoro derivatives of anthranilate. This chain is Anthranilate--CoA ligase (pqsA), found in Pseudomonas aeruginosa (strain ATCC 15692 / DSM 22644 / CIP 104116 / JCM 14847 / LMG 12228 / 1C / PRS 101 / PAO1).